Consider the following 167-residue polypeptide: Peptidoglycan-binding-like protein (167 aa).

An N-terminal signal peptide occupies residues 1 to 24 (MRSPKVKFLTIFTLSILITKMSFA).

It belongs to the IagB/IpgF/P19 family.

The protein localises to the periplasm. The protein is Peptidoglycan-binding-like protein (pbl) of Escherichia coli O157:H7.